Reading from the N-terminus, the 155-residue chain is Small ribosomal subunit protein uS7c (155 aa).

It belongs to the universal ribosomal protein uS7 family. Part of the 30S ribosomal subunit.

It localises to the plastid. The protein resides in the chloroplast. Functionally, one of the primary rRNA binding proteins, it binds directly to 16S rRNA where it nucleates assembly of the head domain of the 30S subunit. The sequence is that of Small ribosomal subunit protein uS7c (rps7) from Butomus umbellatus (Flowering rush).